The sequence spans 158 residues: MQGRLSVWLIKHGLVHRSLGFDYQGIETLQIKPEDWHSIAVILYVYGYNYLRSQCAYDVAPGGLLASVYHLTRIEYGIDQPEEVCIKVFAPRRNPRIPSVFWIWKSADFQERESYDMLGISYNNHPRLKRILMPESWIGWPLRKDYIAPNFYEIQDAH.

Belongs to the complex I 30 kDa subunit family. As to quaternary structure, NDH is composed of at least 16 different subunits, 5 of which are encoded in the nucleus.

The protein resides in the plastid. It localises to the chloroplast thylakoid membrane. The enzyme catalyses a plastoquinone + NADH + (n+1) H(+)(in) = a plastoquinol + NAD(+) + n H(+)(out). It catalyses the reaction a plastoquinone + NADPH + (n+1) H(+)(in) = a plastoquinol + NADP(+) + n H(+)(out). NDH shuttles electrons from NAD(P)H:plastoquinone, via FMN and iron-sulfur (Fe-S) centers, to quinones in the photosynthetic chain and possibly in a chloroplast respiratory chain. The immediate electron acceptor for the enzyme in this species is believed to be plastoquinone. Couples the redox reaction to proton translocation, and thus conserves the redox energy in a proton gradient. The sequence is that of NAD(P)H-quinone oxidoreductase subunit J, chloroplastic from Morus indica (Mulberry).